A 359-amino-acid chain; its full sequence is Nicotinate-nucleotide--dimethylbenzimidazole phosphoribosyltransferase (359 aa).

The active-site Proton acceptor is Glu318.

It belongs to the CobT family. In terms of assembly, homodimer.

The catalysed reaction is 5,6-dimethylbenzimidazole + nicotinate beta-D-ribonucleotide = alpha-ribazole 5'-phosphate + nicotinate + H(+). Its pathway is nucleoside biosynthesis; alpha-ribazole biosynthesis; alpha-ribazole from 5,6-dimethylbenzimidazole: step 1/2. Functionally, catalyzes the synthesis of alpha-ribazole-5'-phosphate from nicotinate mononucleotide (NAMN) and 5,6-dimethylbenzimidazole (DMB). The chain is Nicotinate-nucleotide--dimethylbenzimidazole phosphoribosyltransferase from Escherichia coli (strain UTI89 / UPEC).